The primary structure comprises 246 residues: Probable site-specific recombinase in afa region (246 aa).

The region spanning Ala40–Ala225 is the Tyr recombinase domain. Catalysis depends on residues Arg75, Lys102, His177, Arg180, and His203. The O-(3'-phospho-DNA)-tyrosine intermediate role is filled by Tyr212.

Belongs to the 'phage' integrase family.

The polypeptide is Probable site-specific recombinase in afa region (int) (Escherichia coli).